Reading from the N-terminus, the 134-residue chain is uncharacterized protein (134 aa).

It is found in the cell membrane. In terms of biological role, may have a role in the regulation of NDH-1 biosynthesis. This is an uncharacterized protein from Paracoccus denitrificans.